A 152-amino-acid chain; its full sequence is UPF0756 membrane protein JDM1_1594 (152 aa).

4 helical membrane-spanning segments follow: residues 25–45, 52–72, 85–105, and 115–135; these read ATVVVLLIKLIPNTSKLLTTI, WGVTVITVAILIPIATGQIGF, WIAVACGVLVSVLSFHGVGLL, and LVFGTIMGVVLLKGIAAGPII.

The protein belongs to the UPF0756 family.

The protein resides in the cell membrane. This chain is UPF0756 membrane protein JDM1_1594, found in Lactiplantibacillus plantarum (strain JDM1) (Lactobacillus plantarum).